The chain runs to 499 residues: Kynurenine 3-monooxygenase 3 (499 aa).

Belongs to the aromatic-ring hydroxylase family. KMO subfamily. It depends on FAD as a cofactor.

The protein resides in the mitochondrion outer membrane. The catalysed reaction is L-kynurenine + NADPH + O2 + H(+) = 3-hydroxy-L-kynurenine + NADP(+) + H2O. The protein operates within cofactor biosynthesis; NAD(+) biosynthesis; quinolinate from L-kynurenine: step 1/3. Its function is as follows. Catalyzes the hydroxylation of L-kynurenine (L-Kyn) to form 3-hydroxy-L-kynurenine (L-3OHKyn). Required for synthesis of quinolinic acid. The protein is Kynurenine 3-monooxygenase 3 (bna4-3) of Aspergillus niger (strain ATCC MYA-4892 / CBS 513.88 / FGSC A1513).